We begin with the raw amino-acid sequence, 403 residues long: Indoleamine 2,3-dioxygenase 1 (403 aa).

Position 346 (His-346) interacts with heme b. Residues 360–381 are disordered; it reads QQPKENKTSEDPSKLEAKGTGG. Residues 363–376 are compositionally biased toward basic and acidic residues; that stretch reads KENKTSEDPSKLEA.

The protein belongs to the indoleamine 2,3-dioxygenase family. In terms of assembly, monomer. Heme b is required as a cofactor. In terms of tissue distribution, expressed in mature dendritic cells located in lymphoid organs (including lymph nodes, spleen, tonsils, Peyers's patches, the gut lamina propria, and the thymic medulla), in some epithelial cells of the female genital tract, as well as in endothelial cells of term placenta and in lung parenchyma. Weakly or not expressed in most normal tissues, but mostly inducible in most tissues. Expressed in more than 50% of tumors, either by tumoral, stromal, or endothelial cells (expression in tumor is associated with a worse clinical outcome). Not overexpressed in tumor-draining lymph nodes.

Its subcellular location is the cytoplasm. The protein localises to the cytosol. The enzyme catalyses D-tryptophan + O2 = N-formyl-D-kynurenine. The catalysed reaction is L-tryptophan + O2 = N-formyl-L-kynurenine. It functions in the pathway amino-acid degradation; L-tryptophan degradation via kynurenine pathway; L-kynurenine from L-tryptophan: step 1/2. Activity is inhibited by and MTH-trp (methylthiohydantoin-DL-tryptophan), modestly inhibited by L-1MT (1-methyl-L-tryptophan) but not D-1MT (1-methyl-D-tryptophan). Its function is as follows. Catalyzes the first and rate limiting step of the catabolism of the essential amino acid tryptophan along the kynurenine pathway. Involved in the peripheral immune tolerance, contributing to maintain homeostasis by preventing autoimmunity or immunopathology that would result from uncontrolled and overreacting immune responses. Tryptophan shortage inhibits T lymphocytes division and accumulation of tryptophan catabolites induces T-cell apoptosis and differentiation of regulatory T-cells. Acts as a suppressor of anti-tumor immunity. Limits the growth of intracellular pathogens by depriving tryptophan. Protects the fetus from maternal immune rejection. This Homo sapiens (Human) protein is Indoleamine 2,3-dioxygenase 1.